Here is a 723-residue protein sequence, read N- to C-terminus: Malate synthase G (723 aa).

Residues valine 118, 125–126 (RY), serine 274, and arginine 311 contribute to the acetyl-CoA site. The active-site Proton acceptor is arginine 338. Residues arginine 338, glutamate 427, and 452 to 455 (GFLD) each bind glyoxylate. 2 residues coordinate Mg(2+): glutamate 427 and aspartate 455. Proline 536 serves as a coordination point for acetyl-CoA. Cysteine 617 carries the post-translational modification Cysteine sulfenic acid (-SOH). Catalysis depends on aspartate 631, which acts as the Proton donor. Residue cysteine 688 is modified to Cysteine sulfenic acid (-SOH).

The protein belongs to the malate synthase family. GlcB subfamily. As to quaternary structure, monomer. The cofactor is Mg(2+).

The protein resides in the cytoplasm. It carries out the reaction glyoxylate + acetyl-CoA + H2O = (S)-malate + CoA + H(+). Its pathway is carbohydrate metabolism; glyoxylate cycle; (S)-malate from isocitrate: step 2/2. In terms of biological role, involved in the glycolate utilization. Catalyzes the condensation and subsequent hydrolysis of acetyl-coenzyme A (acetyl-CoA) and glyoxylate to form malate and CoA. In Shigella flexneri, this protein is Malate synthase G.